The primary structure comprises 213 residues: Ribonuclease HII (213 aa).

Residues 27 to 213 (HAVAGVDEAG…FRGVKEHVAP (187 aa)) enclose the RNase H type-2 domain. 3 residues coordinate a divalent metal cation: D33, E34, and D125.

It belongs to the RNase HII family. Mn(2+) serves as cofactor. Mg(2+) is required as a cofactor.

The protein resides in the cytoplasm. It catalyses the reaction Endonucleolytic cleavage to 5'-phosphomonoester.. Its function is as follows. Endonuclease that specifically degrades the RNA of RNA-DNA hybrids. This is Ribonuclease HII from Geobacter metallireducens (strain ATCC 53774 / DSM 7210 / GS-15).